The chain runs to 469 residues: UDP-N-acetylmuramate--L-alanine ligase (469 aa).

113–119 (GAHGKTT) contributes to the ATP binding site.

The protein belongs to the MurCDEF family.

It localises to the cytoplasm. It carries out the reaction UDP-N-acetyl-alpha-D-muramate + L-alanine + ATP = UDP-N-acetyl-alpha-D-muramoyl-L-alanine + ADP + phosphate + H(+). It functions in the pathway cell wall biogenesis; peptidoglycan biosynthesis. Cell wall formation. This chain is UDP-N-acetylmuramate--L-alanine ligase, found in Syntrophobacter fumaroxidans (strain DSM 10017 / MPOB).